The following is a 388-amino-acid chain: Probable proton-coupled zinc antiporter SLC30A3 (388 aa).

The tract at residues methionine 1–leucine 41 is disordered. Residues methionine 1–glutamine 75 are Cytoplasmic-facing. A phosphoserine mark is found at serine 63 and serine 66. The chain crosses the membrane as a helical span at residues leucine 76–leucine 96. Over alanine 97–aspartate 105 the chain is Lumenal. The chain crosses the membrane as a helical span at residues alanine 106–serine 126. Residues histidine 108 and aspartate 112 each contribute to the Zn(2+) site. Topologically, residues threonine 127 to glycine 145 are cytoplasmic. Residues alanine 146–leucine 166 traverse the membrane as a helical segment. Residues arginine 167–alanine 177 are Lumenal-facing. Residues glycine 178–leucine 198 traverse the membrane as a helical segment. Topologically, residues histidine 199 to alanine 235 are cytoplasmic. A helical transmembrane segment spans residues phenylalanine 236–isoleucine 256. Residues histidine 238 and aspartate 242 each contribute to the Zn(2+) site. At tyrosine 257 to lysine 263 the chain is on the lumenal side. The chain crosses the membrane as a helical span at residues valine 264–threonine 284. At leucine 285–alanine 388 the chain is on the cytoplasmic side.

The protein belongs to the cation diffusion facilitator (CDF) transporter (TC 2.A.4) family. SLC30A subfamily. In terms of assembly, homodimer. Homodimerization is negligible compared to the human protein. It could explain the lower efficiency of zinc transport. Interacts with TMEM163. As to expression, expression is restricted to brain (at protein level). In the brain, most abundant in hippocampus and cerebral cortex. The mRNA is also detected in testis, expression being restricted to germ cells and highest in pachytene spermatocytes and round spermatids.

The protein resides in the cytoplasmic vesicle. It localises to the secretory vesicle. It is found in the synaptic vesicle membrane. Its subcellular location is the synapse. The protein localises to the synaptosome. The protein resides in the late endosome membrane. It localises to the lysosome membrane. It catalyses the reaction Zn(2+)(in) + 2 H(+)(out) = Zn(2+)(out) + 2 H(+)(in). Probable proton-coupled zinc ion antiporter mediating the import of zinc from cytoplasm into synaptic vesicles and participating to cellular zinc ion homeostasis in the brain. The protein is Probable proton-coupled zinc antiporter SLC30A3 of Mus musculus (Mouse).